The primary structure comprises 544 residues: Tyrosine-protein kinase fynb (544 aa).

Glycine 2 is lipidated: N-myristoyl glycine. S-palmitoyl cysteine attachment occurs at residues cysteine 3 and cysteine 6. Residues 89-150 (TGVTLFVALY…PSNYVAPVDS (62 aa)) enclose the SH3 domain. Residues 156-253 (WYFGKLGRKD…GLCCRLVVPC (98 aa)) form the SH2 domain. A Protein kinase domain is found at 278–531 (LQLIKRLGNG…YLQAFLEDYF (254 aa)). Residues 284 to 292 (LGNGQFGEV) and lysine 306 contribute to the ATP site. Aspartate 397 serves as the catalytic Proton acceptor. Phosphotyrosine; by autocatalysis is present on tyrosine 427. Tyrosine 538 bears the Phosphotyrosine mark.

This sequence belongs to the protein kinase superfamily. Tyr protein kinase family. SRC subfamily. Mn(2+) is required as a cofactor.

Its subcellular location is the cytoplasm. The catalysed reaction is L-tyrosyl-[protein] + ATP = O-phospho-L-tyrosyl-[protein] + ADP + H(+). Its activity is regulated as follows. Inhibited by phosphorylation of Tyr-538 by leukocyte common antigen and activated by dephosphorylation of this site. Tyrosine-protein kinase implicated in the control of cell growth. Plays a role in the regulation of intracellular calcium levels. Required in brain development and mature brain function with important roles in the regulation of axon growth, axon guidance, and neurite extension. Role in CNTN1-mediated signaling. This chain is Tyrosine-protein kinase fynb (fynb), found in Danio rerio (Zebrafish).